The chain runs to 227 residues: NADH-quinone oxidoreductase subunit C (227 aa).

Belongs to the complex I 30 kDa subunit family. NDH-1 is composed of 14 different subunits. Subunits NuoB, C, D, E, F, and G constitute the peripheral sector of the complex.

It localises to the cell inner membrane. The enzyme catalyses a quinone + NADH + 5 H(+)(in) = a quinol + NAD(+) + 4 H(+)(out). NDH-1 shuttles electrons from NADH, via FMN and iron-sulfur (Fe-S) centers, to quinones in the respiratory chain. The immediate electron acceptor for the enzyme in this species is believed to be ubiquinone. Couples the redox reaction to proton translocation (for every two electrons transferred, four hydrogen ions are translocated across the cytoplasmic membrane), and thus conserves the redox energy in a proton gradient. This chain is NADH-quinone oxidoreductase subunit C, found in Coxiella burnetii (strain RSA 331 / Henzerling II).